The sequence spans 335 residues: MIREWKNDCQRIEKQRASDTMVQERKNEKPVRIFNTNSSFQDQAPTCCQEDLSSASPLRIWSKFYRSDPRIALGKYSPLEKEILRLGGIHTIAARRLLAYKQEEECRMLKELQLLSPDYKQAMEYKKKHSSPCAICVPLEKIWTAKVIAPLEAFKMPQREQVNVSKHIERMRLARALGNHQPLPYIERFTRSSFLSGVGLGPMAKNKARRKEDNYDTHNCDDANQDKKEEAEGKNTKRREIKMNVVFKSKEPKKCLTYHGNDRKSFLPAKKPERSIAGLTNRNLFCISEFPGDLMLMNQDFISRRDHFSDLVKTYSLEEESIWKERMRKATPYHY.

A disordered region spans residues 201–236 (GPMAKNKARRKEDNYDTHNCDDANQDKKEEAEGKNT). The span at 210-235 (RKEDNYDTHNCDDANQDKKEEAEGKN) shows a compositional bias: basic and acidic residues.

Dispensable for normal development and fertility. This is an uncharacterized protein from Homo sapiens (Human).